The sequence spans 447 residues: Probable tRNA methyltransferase 9B (447 aa).

Ser212 carries the post-translational modification Phosphoserine. 2 disordered regions span residues 274-306 (AWAN…PNLD) and 320-348 (WLRT…NFLD). Over residues 276 to 286 (ANSTVSQQPSR) the composition is skewed to polar residues.

This sequence belongs to the methyltransferase superfamily.

Its function is as follows. May modify wobble uridines in specific arginine and glutamic acid tRNAs. Acts as a tumor suppressor by promoting the expression of LIN9. The polypeptide is Probable tRNA methyltransferase 9B (Trmt9b) (Mus musculus (Mouse)).